A 421-amino-acid chain; its full sequence is Protein PHLOEM UNLOADING MODULATOR (421 aa).

A run of 7 helical transmembrane segments spans residues 30 to 50 (LMPVLWSVLAIAVVTRVLFYK), 60 to 80 (IPFLGSIVFLLCALLFEALCV), 124 to 144 (HIIGLHHFLMLFIMLGFSVVF), 158 to 178 (YIFTMGVGRLLRAITFVSTIL), 286 to 306 (AMAWTEAYGGFSSAMIWLFVA), 323 to 343 (CIVAIYVGILLWKMTGFIWSA), and 397 to 417 (TVFACATVITTLTIVILALTL).

The protein belongs to the sphingomyelin synthase family.

It is found in the membrane. It functions in the pathway sphingolipid metabolism. Its function is as follows. Catalyzes the biosynthesis of sphingolipids with very long-chain fatty acid (VLCFA). Required for the formation of plasmodesmal cytoplasmic sleeve during the transition from type I to type II plasmodesmata to modulate post-sieve elements (SE) unloading and symplastic cell-to-cell molecular trafficking at the phloem pole pericycle (PPP)-endodermis interface in roots. The protein is Protein PHLOEM UNLOADING MODULATOR of Arabidopsis thaliana (Mouse-ear cress).